The chain runs to 117 residues: Ig lambda-1 chain V region (117 aa).

Positions 1-20 are cleaved as a signal peptide; it reads MAWISLILSLLALSSGGAIS. Gln-21 is modified (pyrrolidone carboxylic acid). An Ig-like domain is found at 21–117; it reads QAVVTQESAL…YFCALWYSNH (97 aa).

This Mus musculus (Mouse) protein is Ig lambda-1 chain V region.